Reading from the N-terminus, the 472-residue chain is Carboxypeptidase E (472 aa).

A signal peptide spans 1–21 (MLHAMRPVLLVAALLAVTAHA). The Peptidase M14 domain occupies 39–359 (HYHNQAQLEA…KSIFEYVWKS (321 aa)). Positions 101 and 104 each coordinate Zn(2+). N134 is a glycosylation site (N-linked (GlcNAc...) asparagine). H232 is a Zn(2+) binding site. E329 acts as the Proton donor/acceptor in catalysis. N-linked (GlcNAc...) asparagine glycans are attached at residues N385 and N428.

Belongs to the peptidase M14 family. It depends on Zn(2+) as a cofactor. Expression is restricted to the nervous system.

The protein localises to the cell projection. The protein resides in the axon. Its subcellular location is the perikaryon. It localises to the cytoplasmic vesicle. It is found in the secretory vesicle lumen. It catalyses the reaction Release of C-terminal arginine or lysine residues from polypeptides.. In terms of biological role, during FMRFamide-like peptide (FaRPs or FLP) and neuropeptide-like protein (NLP) precursor processing, catalyzes the removal of Arg or Lys residues from the C-terminus following the initial endoprotease cleavage. By processing neuropeptides, modulates basal acetylcholine release at the ventral cord neuromuscular junctions. Involved in egg-laying, defecation and locomotion. By processing FLP neuropeptides, regulates the turning step of male mating behavior. Involved in reducing pharyngeal pumping in response to high CO(2) levels. The chain is Carboxypeptidase E from Caenorhabditis elegans.